The following is a 276-amino-acid chain: Putative translation initiation factor eIF-2B subunit 2-like (276 aa).

It belongs to the eIF-2B alpha/beta/delta subunits family. As to quaternary structure, complex of two different subunits.

Catalyzes the exchange of initiation factor 2-bound GDP for GTP. The polypeptide is Putative translation initiation factor eIF-2B subunit 2-like (Pyrococcus furiosus (strain ATCC 43587 / DSM 3638 / JCM 8422 / Vc1)).